The following is a 420-amino-acid chain: Ketoreductase sphF (420 aa).

The tract at residues 1–21 (MLERPSFPRLGAGTRHHRPLG) is disordered. A helical membrane pass occupies residues 29–49 (WLLAFTGISGIAGMMIPYVPW). The interval 275–298 (RQKRSPSPGRHPALGSPPAQLRQD) is disordered.

The protein resides in the membrane. It catalyses the reaction 3-oxopresphingofungin + NADPH + 2 H(+) = presphingofungin + NADP(+). The protein operates within secondary metabolite biosynthesis. Ketoreductase; part of the gene cluster that mediates the biosynthesis of sphingofungins, bioactive molecules acting as sphingolipid inhibitors via inhibiting serine palmitoyl transferase (SPT). Within the pathway, sphF catalyzes the reduction of the C-3 ketone of 3-keto-presphingofungin to produce presphingofungin. Sphingofungin biosynthesis starts with the PKS sphB that produces an C18 polyketide precursor 3-hydroxyoctadeca-4,10-dienoyl-ACP containing one delta-6 desaturation and one delta-12 desaturation. The aminoacyl transferase sphA uses the sphB product to produce 3-keto-presphingofungin by adding an aminomalonate molecule. SphF then reduces the C-3 ketone of 3-keto-presphingofungin which leads to presphingofungin. The cytochrome P450 monooxygenase sphH converts presphingofungin into sphingofungin B1 which is further converted to sphingofungin B by the dioxygenase sphC. SphC is also able to convert presphingofungin into sphingofungin B2. The acetyltransferase sphE acetylates sphingofungin B to produce sphingofungin C, but can also convert sphingofungin B1 into sphingofungin C1 and sphingofungin B2 into sphingofungin C2. Finally, sphingofungin C can be spontaneously converted into sphingofungin D. The chain is Ketoreductase sphF from Aspergillus fumigatus (strain CBS 144.89 / FGSC A1163 / CEA10) (Neosartorya fumigata).